We begin with the raw amino-acid sequence, 633 residues long: Proline-rich receptor-like protein kinase PERK4 (633 aa).

The segment covering 1–29 (MASSPESAPPTNSTSSPSPPSNTNSTTSS) has biased composition (low complexity). Residues 1–145 (MASSPESAPP…GSSGGGGGGR (145 aa)) are disordered. Over 1 to 151 (MASSPESAPP…GGGRSNTNTA (151 aa)) the chain is Extracellular. Residues Asn12 and Asn24 are each glycosylated (N-linked (GlcNAc...) asparagine). 2 stretches are compositionally biased toward pro residues: residues 30–41 (PPAPSPPSPTPP) and 48–65 (SPPP…PNPP). N-linked (GlcNAc...) asparagine glycosylation is present at Asn66. Positions 77-90 (QGGGGERGNGGNNG) are enriched in gly residues. Residues 106 to 135 (SRSNGDNGGSRSSPPGDTGGSRSDNPPSSG) show a composition bias toward low complexity. Over residues 136–145 (GSSGGGGGGR) the composition is skewed to gly residues. The helical transmembrane segment at 152-172 (IIVGVLVGAGLLMIVLIIVCL) threads the bilayer. Topologically, residues 173–633 (RRKKKRKDSF…MGTKSPTPPK (461 aa)) are cytoplasmic. Residues 193–222 (QYYGNNNNNNASQNYPNWHLNSQGQNQQST) show a composition bias toward low complexity. A disordered region spans residues 193-255 (QYYGNNNNNN…SMYSGPSRPV (63 aa)). A Phosphothreonine modification is found at Thr273. The 279-residue stretch at 284–562 (FTDANLLGQG…VRALEGEVSL (279 aa)) folds into the Protein kinase domain. ATP-binding positions include 290 to 298 (LGQGGFGYV) and Lys312. Position 357 is a phosphotyrosine (Tyr357). The active-site Proton acceptor is Asp408. A Phosphoserine modification is found at Ser441. A phosphothreonine mark is found at Thr442 and Thr447. Position 455 is a phosphotyrosine (Tyr455). Residues 608–619 (FPVSDCEGTSSN) are compositionally biased toward polar residues. A disordered region spans residues 608–633 (FPVSDCEGTSSNDSRDMGTKSPTPPK).

The protein belongs to the protein kinase superfamily. Ser/Thr protein kinase family. As to expression, mostly expressed in inflorescence bolts. Also present in roots, stems, germinated seeds, cotyledons, pollen, stamen and stigma.

The protein resides in the cell membrane. The enzyme catalyses L-seryl-[protein] + ATP = O-phospho-L-seryl-[protein] + ADP + H(+). It catalyses the reaction L-threonyl-[protein] + ATP = O-phospho-L-threonyl-[protein] + ADP + H(+). Activated by ABA and Ca(2+). Its function is as follows. Required during abscisic acid (ABA)-mediated activation of Ca(2+) channels. Regulates ABA signaling pathways. Modulates the expression of genes related to cell elongation and ABA signaling during root growth. The chain is Proline-rich receptor-like protein kinase PERK4 (PERK4) from Arabidopsis thaliana (Mouse-ear cress).